The primary structure comprises 429 residues: Serine--tRNA ligase (429 aa).

234–236 serves as a coordination point for L-serine; that stretch reads TSE. ATP is bound by residues 265–267 and Val281; that span reads RKE. Position 288 (Glu288) interacts with L-serine. ATP is bound at residue 352–355; sequence ELVS. Thr389 is a binding site for L-serine.

It belongs to the class-II aminoacyl-tRNA synthetase family. Type-1 seryl-tRNA synthetase subfamily. As to quaternary structure, homodimer. The tRNA molecule probably binds across the dimer.

It catalyses the reaction tRNA(Ser) + L-serine + ATP = L-seryl-tRNA(Ser) + AMP + diphosphate + H(+). The catalysed reaction is tRNA(Sec) + L-serine + ATP = L-seryl-tRNA(Sec) + AMP + diphosphate + H(+). It participates in aminoacyl-tRNA biosynthesis; selenocysteinyl-tRNA(Sec) biosynthesis; L-seryl-tRNA(Sec) from L-serine and tRNA(Sec): step 1/1. Its function is as follows. Catalyzes the attachment of serine to tRNA(Ser). Is also probably able to aminoacylate tRNA(Sec) with serine, to form the misacylated tRNA L-seryl-tRNA(Sec), which will be further converted into selenocysteinyl-tRNA(Sec). In Encephalitozoon cuniculi (strain GB-M1) (Microsporidian parasite), this protein is Serine--tRNA ligase.